We begin with the raw amino-acid sequence, 421 residues long: Protein FAM110C (421 aa).

Disordered stretches follow at residues 1-36 (MRAL…NKSA), 51-80 (TLGS…PSAL), and 141-266 (TTRV…PASM). 3 stretches are compositionally biased toward basic and acidic residues: residues 143-155 (RVAD…KETE), 185-202 (PAEK…KETE), and 232-249 (PAEK…KETE). Residue serine 350 is modified to Phosphoserine.

This sequence belongs to the FAM110 family. Interacts with AKT1; the interaction is transient and follows AKT1 activation. Interacts with PPP2CA and alpha-tubulin.

It localises to the cytoplasm. The protein localises to the cytoskeleton. It is found in the microtubule organizing center. Its subcellular location is the centrosome. The protein resides in the spindle pole. It localises to the nucleus. Its function is as follows. May play a role in microtubule organization. May play a role in cell spreading and cell migration of epithelial cells; the function may involve the AKT1 signaling pathway. The chain is Protein FAM110C (Fam110c) from Mus musculus (Mouse).